Reading from the N-terminus, the 53-residue chain is uncharacterized protein (53 aa).

The protein belongs to the ELIP/psbS family.

It is found in the plastid. It localises to the chloroplast. Functionally, possible role in chlorophyll and/or carotenoid binding. This is an uncharacterized protein from Guillardia theta (Cryptophyte).